The primary structure comprises 2094 residues: MEKKKKIIREVLRSGKVQNPQYLFNLWTNCNSFRLSTKIIFNWEHLIKLLDPRIIILLIPRDIRGFRSHISFICLVLFTLPIFMHGFNRKGLLETKHLYLSQVVDEHTNNGECKNTTQEECFKFLKYLDISPHNSFIYYRGSEKYISYLPGLEEGVVSTEHGISNNIGIMPPVYDQIKLLGLQWWKDCVIEGIFPSRGAYGEECISNNNFIYPEYKNTEDIKYFFEFYGEAKAWEINVSDSKSGGNTKFSIDLALDLTEKRYLNRNKKNFEWLFDKMSINHIHIDKQLINNSSTFWDLSPPARVERNNTKSKLFSKCFSKDSSICRIEKRFTEGIKYLMENLFYEGEKIIIDNFPKSISYAFSDVSSVDEPSMGFHTTEEPLNNNKFGFDKKYRNVFLKYSVRSDGNRIVDAWNTRNKFKNFCLNCFVLPDAGSCTIRRKPLNINKLDFIIFMNWDISRNIFLFPRLIPHKCNRHYIFHFLIKYKKGLVIKINQFYLSITKSNHIYESNELPLGVEYATENFFHCIANHGTGTPSWYKSIINIKEFFFTDLKKSLSSSYLKYESIYFLKYWIDEGLQKGKSFNNIARNTINQHSLNGVKGVRKGFYFYKGNKYVNWNLNLYEWSDHRTNRNFKRSPKRFICGNNYLKIMSNRTEFFTNRNSRSWSGKLENNYSKFYFICKNSIKKGFNLSIFNKSEKINTLGNSPKIIDTKSIYSEMNPSQNHEFLQELGFPSDKESITPLILNEIPVSKFTIDSFYNRFNINVEYMKLSDETTFFAILRNKDIWFDPIKLSNKSLLKTYFDQAIIPKFLDHLLYIQPDHNKKWYFYFCNTEENIITDSKFTYGQLLSILPKHNNVFLSSFVGIEPSDSEENTILVTQPKVSNIFFKCLKRSYNQIFALVNNSYKLLILLNRINLLFHKKINTSFTEQFSTITLLTGKQVVNLEITYYRQPDIEIFNLGRKNVNNGLLDEKALSPNLSVIQRQSYKHDLFSESLLRIRNKNNKMFHWFKKLFLINDSAGDSRSVTGSRVIGGKSTKLILLNNSNLFVEEIKKNETLFLSSSSPHLNERARNAETYKIYQVDSVEKKNALFRKYTPWFFTLKWWKYFLQTFTGVLPNGISLNSSDQFEYVPQICAQDREISDDQPKKALLNFIWSYSKSINCWNDKYLIIISLFLSSYLFFQNYLFNLIGSDYTDLCKHFGIIRYLIDRKSYWNKLVYQHPVKSIDTQNRFVNFLKKIGHYAKKRKLDLFTMEELNAWLTTNQSLDIFPRKKELLIQSPITRKKIYRYGFNLIYNPHLLSNDFGYKTTQQGLYYLRYLAESFDKSLVNYPFYHFNLAHKWVFLAFWQRITSPHVSRQTNTLGFTSHGIPIPLRLGLSPSKGNLLVGPPETGRSYLIKNLAADSYVPSIQVSISELLYNEPDITTKDWNVLMDNLHQLALILELTKEMSPCIVWIQNIHELNSNCLTQDIKSNSNLPLGLLLTYFRTNFVKNHTLSMIAFASTHIPEKIDPSLIYPNRLDRLMNIRMLSIPQRQKEFYIFLRSKCFHLENNLSCLNEFGYGTMGYDVRDLASLVNEVSSISITYDESVIYDDTIRLAFHRQALGFAYADTNIEYGQNDEKLLYKVGKAIVQTIITKKFTMNPLYKGNNFWKKRFYYLSEWFSEPPITETTVKEFTILSHILECLAGSAARDSWFRSENEQENSIPLDKYADNDSDSACTTLESLLVEFPRLEIYQDESISNKMRLAPYSRTTNLVNIMQNINFPIQYKQKLSELVSNTACSPRIWRFSFACNNIFNRVERPNEFRIPYYIGLFGENIQTLSKYLQNDFNDARFAQYIMKQQSPHNRVLSKMRRISLQELECQLETMLLKEQFETLGIFSPVQYPIEYRISNKPLLFLGKRFVWDPTGLLSKDHHLAFPYQQLFVDEEMLRRFYVTYGTEREQGKSQSIQKIKQFFVRRGYSRDSMSNLYISGLKQFTFADKQNIETFKSTERIGVQLKHPHLFAAVYSYQPWLMEYSQEKFAHFDLLNNHQGWLEVNSSLSSYSSVHSTLFESHQYLLNSFRCNKMLLNQIIKLLLKNRWLFKNEIETLLVLSKGG.

1385 to 1392 (GPPETGRS) contacts ATP.

The protein belongs to the Ycf2 family.

It localises to the plastid. The protein resides in the chloroplast stroma. Functionally, probable ATPase of unknown function. Its presence in a non-photosynthetic plant (Epifagus virginiana) and experiments in tobacco indicate that it has an essential function which is probably not related to photosynthesis. The chain is Protein Ycf2 from Huperzia lucidula (Shining clubmoss).